The sequence spans 125 residues: MTPSTSDARSRRRSAEPFLWLLFSAGGMVTALVAPVLLLLFGLAFPLGWLDAPDHGHLLAMVRNPITKLVVLVLVVLALFHAAHRFRFVLDHGLQLGRFDRVIALWCYGMAVLGSATAGWMLLTM.

Helical transmembrane passes span 29 to 49 (VTALVAPVLLLLFGLAFPLGW), 64 to 84 (NPITKLVVLVLVVLALFHAAH), and 102 to 122 (VIALWCYGMAVLGSATAGWML).

It belongs to the FrdD family. In terms of assembly, part of an enzyme complex containing four subunits: a flavoprotein (FrdA), an iron-sulfur protein (FrdB), and two hydrophobic anchor proteins (FrdC and FrdD).

It localises to the cell membrane. In terms of biological role, anchors the catalytic components of the fumarate reductase complex to the cell membrane, binds quinones. This chain is Fumarate reductase subunit D, found in Mycobacterium bovis (strain BCG / Tokyo 172 / ATCC 35737 / TMC 1019).